The sequence spans 542 residues: Carbamoyl phosphate synthase large chain, C-terminal section (542 aa).

Residues 1-389 are carbamoyl phosphate synthetic domain; sequence MSDKVLVIGA…WKAQLAAGHE (389 aa). The 195-residue stretch at 122-316 folds into the ATP-grasp domain; it reads SKLLKKLGIP…LAKIGTKAIL (195 aa). ATP contacts are provided by R158, R197, I199, E204, G230, V231, H232, S233, Q273, and E287. 3 residues coordinate Mg(2+): Q273, E287, and N289. Positions 273, 287, and 289 each coordinate Mn(2+). The MGS-like domain occupies 388 to 542; that stretch reads HELPLEGTAV…KPEELTRYGG (155 aa). An allosteric domain region spans residues 390 to 542; that stretch reads LPLEGTAVIS…KPEELTRYGG (153 aa).

This sequence belongs to the CarB family. Composed of two chains; the small (or glutamine) chain promotes the hydrolysis of glutamine to ammonia, which is used by the large (or ammonia) chain to synthesize carbamoyl phosphate. Tetramer of heterodimers (alpha,beta)4. The cofactor is Mg(2+). It depends on Mn(2+) as a cofactor.

The enzyme catalyses hydrogencarbonate + L-glutamine + 2 ATP + H2O = carbamoyl phosphate + L-glutamate + 2 ADP + phosphate + 2 H(+). It catalyses the reaction hydrogencarbonate + NH4(+) + 2 ATP = carbamoyl phosphate + 2 ADP + phosphate + 2 H(+). The protein operates within amino-acid biosynthesis; L-arginine biosynthesis; carbamoyl phosphate from bicarbonate: step 1/1. It participates in pyrimidine metabolism; UMP biosynthesis via de novo pathway; (S)-dihydroorotate from bicarbonate: step 1/3. Its function is as follows. Large subunit of the glutamine-dependent carbamoyl phosphate synthetase (CPSase). CPSase catalyzes the formation of carbamoyl phosphate from the ammonia moiety of glutamine, carbonate, and phosphate donated by ATP, constituting the first step of 2 biosynthetic pathways, one leading to arginine and/or urea and the other to pyrimidine nucleotides. The large subunit (synthetase) binds the substrates ammonia (free or transferred from glutamine from the small subunit), hydrogencarbonate and ATP and carries out an ATP-coupled ligase reaction, activating hydrogencarbonate by forming carboxy phosphate which reacts with ammonia to form carbamoyl phosphate. In Methanopyrus kandleri (strain AV19 / DSM 6324 / JCM 9639 / NBRC 100938), this protein is Carbamoyl phosphate synthase large chain, C-terminal section (carB2).